A 128-amino-acid chain; its full sequence is Fluoride-specific ion channel FluC (128 aa).

Transmembrane regions (helical) follow at residues alanine 7–valine 27, threonine 34–isoleucine 54, leucine 70–isoleucine 90, and leucine 104–alanine 124. 2 residues coordinate Na(+): glycine 78 and threonine 81.

It belongs to the fluoride channel Fluc/FEX (TC 1.A.43) family.

It localises to the cell inner membrane. It catalyses the reaction fluoride(in) = fluoride(out). With respect to regulation, na(+) is not transported, but it plays an essential structural role and its presence is essential for fluoride channel function. Functionally, fluoride-specific ion channel. Important for reducing fluoride concentration in the cell, thus reducing its toxicity. This chain is Fluoride-specific ion channel FluC, found in Prosthecochloris aestuarii (strain DSM 271 / SK 413).